We begin with the raw amino-acid sequence, 1090 residues long: MSVYHLPTLLNPLVNAIFNCPEPERSPLKKLFANLKTRRFILLAPPSEYLLNYHDVKSKLPLHDLCYNAEFINSYILLMTENSYINTNSRDSHYETLDGKTVVIQWKNNVIHALNGFHIRRRLKILETKILPNFNDYFEGAADFIILFIDQPLNCEFVPNDYLQCFHNYEKIPKNAHAMPNLSIDSFQQERSSFENILHIHPARLTQLGQLFSSYRTLAPGDDPSRSIFESIVQQAFDGMKSDSLFKNFSNLYDLIHDYFELNLYDDIWSRLTTHFKGHEVDTEKYKYFSVNQLLTDFYSKDYGEFELHDITLIERRLHLASKHLQKLALTHSYAEKSKILVETLQKLSGTTEMDSHQLELPDGLNNMTMDADTLISLFVLVVCRSEQKHLKSHLYYLQNFSNNSSSTKFGILGYAVSTLEAVVCYFEDFNKNTGNVAKANTLCEKTKNLLDKLSCENPTNEVEDLATYKDILTYRNEQGQSILSICITNHKNYILLDILSEYETDFPVEDLLEDETIDGSTLLIESIKAGNLEAAKVLIKIMLFNCTEEELVSYINKTDKYARTVAHYLTHEMDILKSIGNYIDWKRKNSSGQTPLFSIFRSYDQPNYEEMVKTAFDIANTWYRKHNSLFDYLDHTDNKGNSLLHVLKTNIPILLQLTKLDINEENYKGLTPLMVYVKYKRLSNIDAITKDRRLILEKVQNSTFFTCFDYAKDHSVLSKIGERGVKDSLFGLIYFHSLRYHNLNATTNITSVSNAEKPFATTVINMKTIQGLLRSILKDNPFTFLPLNTYIDEISHLNRSDLTIIGKTDVTSLLHQLTNCFNVLLFLKKIPENLFTDEASILYWMRINTSKRNQKPSGKENPKTMEPEEINMIQSFLRFNFDEISSFKASLNILRKVLIFINLKSDDFEDAYKGLNEMGRKLINSEASSAFKGIITNHNMFSELSLAELLENVRFLEQCTIQLSSFVQIILFEKIPNWWKHYGEFLALHKSYRKAFPNMVKPKSASDTSSRAPLGGFIETKREQSEQRLAVQIKASSKMLKELGSEIFVAHERLAEELSNYMEFRKACLDQRSLVAFATTNISVLQECV.

Residues 289–436 enclose the VPS9 domain; the sequence is FSVNQLLTDF…FEDFNKNTGN (148 aa).

This sequence belongs to the UPF0507 family.

This Saccharomyces cerevisiae (strain RM11-1a) (Baker's yeast) protein is UPF0507 protein SCRG_01893.